A 188-amino-acid chain; its full sequence is Probable chemoreceptor glutamine deamidase CheD (188 aa).

The protein belongs to the CheD family.

The enzyme catalyses L-glutaminyl-[protein] + H2O = L-glutamyl-[protein] + NH4(+). Its function is as follows. Probably deamidates glutamine residues to glutamate on methyl-accepting chemotaxis receptors (MCPs), playing an important role in chemotaxis. This chain is Probable chemoreceptor glutamine deamidase CheD, found in Caulobacter sp. (strain K31).